A 319-amino-acid polypeptide reads, in one-letter code: ATP-dependent 6-phosphofructokinase (319 aa).

Glycine 11 serves as a coordination point for ATP. 21 to 25 (RAVVR) contacts ADP. Residues 72–73 (RC) and 102–105 (GDGS) contribute to the ATP site. Aspartate 103 lines the Mg(2+) pocket. 125 to 127 (TID) lines the substrate pocket. The active-site Proton acceptor is aspartate 127. Arginine 154 lines the ADP pocket. Residues arginine 162 and 169 to 171 (MGR) contribute to the substrate site. ADP-binding positions include 185-187 (GAE), arginine 211, and 213-215 (KKH). Substrate is bound by residues glutamate 222, arginine 243, and 249 to 252 (HVQR).

Belongs to the phosphofructokinase type A (PFKA) family. ATP-dependent PFK group I subfamily. Prokaryotic clade 'B1' sub-subfamily. In terms of assembly, homotetramer. Requires Mg(2+) as cofactor.

Its subcellular location is the cytoplasm. The catalysed reaction is beta-D-fructose 6-phosphate + ATP = beta-D-fructose 1,6-bisphosphate + ADP + H(+). It participates in carbohydrate degradation; glycolysis; D-glyceraldehyde 3-phosphate and glycerone phosphate from D-glucose: step 3/4. Allosterically activated by ADP and other diphosphonucleosides, and allosterically inhibited by phosphoenolpyruvate. Its function is as follows. Catalyzes the phosphorylation of D-fructose 6-phosphate to fructose 1,6-bisphosphate by ATP, the first committing step of glycolysis. In Bacillus cytotoxicus (strain DSM 22905 / CIP 110041 / 391-98 / NVH 391-98), this protein is ATP-dependent 6-phosphofructokinase.